The primary structure comprises 879 residues: Beta-mannosidase (879 aa).

An N-terminal signal peptide occupies residues Met-1 to Ala-17. Residues Asn-35 and Asn-77 are each glycosylated (N-linked (GlcNAc...) asparagine). A disulfide bridge connects residues Cys-167 and Cys-176. A substrate-binding site is contributed by Trp-190–Trp-192. Residues Asn-297 and Asn-302 are each glycosylated (N-linked (GlcNAc...) asparagine). Asn-456 contacts substrate. The Proton donor role is filled by Glu-457. 3 disulfide bridges follow: Cys-540–Cys-629, Cys-732–Cys-761, and Cys-764–Cys-769. Glu-554 functions as the Nucleophile in the catalytic mechanism. Residue Asn-607 is glycosylated (N-linked (GlcNAc...) asparagine). An N-linked (GlcNAc...) asparagine glycan is attached at Asn-803.

This sequence belongs to the glycosyl hydrolase 2 family. Monomer. The N-terminus is blocked. Post-translationally, N-glycosylated. Detected in kidney (at protein level). Highest expression is found in thyroid tissue. The amount of transcript is significantly higher in normal tissues than in tissues affected by the disease.

It is found in the lysosome. It catalyses the reaction Hydrolysis of terminal, non-reducing beta-D-mannose residues in beta-D-mannosides.. It functions in the pathway glycan metabolism; N-glycan degradation. Its function is as follows. Exoglycosidase that cleaves the single beta-linked mannose residue from the non-reducing end of all N-linked glycoprotein oligosaccharides. The sequence is that of Beta-mannosidase (MANBA) from Bos taurus (Bovine).